Here is a 354-residue protein sequence, read N- to C-terminus: UDP-3-O-acylglucosamine N-acyltransferase (354 aa).

His-245 acts as the Proton acceptor in catalysis.

Belongs to the transferase hexapeptide repeat family. LpxD subfamily. As to quaternary structure, homotrimer.

The catalysed reaction is a UDP-3-O-[(3R)-3-hydroxyacyl]-alpha-D-glucosamine + a (3R)-hydroxyacyl-[ACP] = a UDP-2-N,3-O-bis[(3R)-3-hydroxyacyl]-alpha-D-glucosamine + holo-[ACP] + H(+). The protein operates within bacterial outer membrane biogenesis; LPS lipid A biosynthesis. In terms of biological role, catalyzes the N-acylation of UDP-3-O-acylglucosamine using 3-hydroxyacyl-ACP as the acyl donor. Is involved in the biosynthesis of lipid A, a phosphorylated glycolipid that anchors the lipopolysaccharide to the outer membrane of the cell. This chain is UDP-3-O-acylglucosamine N-acyltransferase, found in Anaeromyxobacter sp. (strain K).